Consider the following 253-residue polypeptide: Phosphate import ATP-binding protein PstB (253 aa).

The ABC transporter domain occupies 7–248 (IEVEDLNVYF…PRDKRTEDYI (242 aa)). Residue 39–46 (GPSGCGKS) participates in ATP binding.

It belongs to the ABC transporter superfamily. Phosphate importer (TC 3.A.1.7) family. The complex is composed of two ATP-binding proteins (PstB), two transmembrane proteins (PstC and PstA) and a solute-binding protein (PstS).

The protein localises to the cell membrane. The enzyme catalyses phosphate(out) + ATP + H2O = ADP + 2 phosphate(in) + H(+). Part of the ABC transporter complex PstSACB involved in phosphate import. Responsible for energy coupling to the transport system. The protein is Phosphate import ATP-binding protein PstB of Methanothermobacter thermautotrophicus (strain ATCC 29096 / DSM 1053 / JCM 10044 / NBRC 100330 / Delta H) (Methanobacterium thermoautotrophicum).